A 433-amino-acid polypeptide reads, in one-letter code: Glutamyl-tRNA reductase (433 aa).

Residues 49 to 52 (TCNR), S109, 114 to 116 (EGQ), and Q120 each bind substrate. C50 acts as the Nucleophile in catalysis. 198–203 (GAGRMS) lines the NADP(+) pocket.

It belongs to the glutamyl-tRNA reductase family. As to quaternary structure, homodimer.

It carries out the reaction (S)-4-amino-5-oxopentanoate + tRNA(Glu) + NADP(+) = L-glutamyl-tRNA(Glu) + NADPH + H(+). It participates in porphyrin-containing compound metabolism; protoporphyrin-IX biosynthesis; 5-aminolevulinate from L-glutamyl-tRNA(Glu): step 1/2. It functions in the pathway porphyrin-containing compound metabolism; chlorophyll biosynthesis. Its function is as follows. Catalyzes the NADPH-dependent reduction of glutamyl-tRNA(Glu) to glutamate 1-semialdehyde (GSA). This Prochlorococcus marinus subsp. pastoris (strain CCMP1986 / NIES-2087 / MED4) protein is Glutamyl-tRNA reductase.